Reading from the N-terminus, the 265-residue chain is Tryptophan synthase alpha chain (265 aa).

Active-site proton acceptor residues include glutamate 49 and aspartate 60.

The protein belongs to the TrpA family. In terms of assembly, tetramer of two alpha and two beta chains.

The enzyme catalyses (1S,2R)-1-C-(indol-3-yl)glycerol 3-phosphate + L-serine = D-glyceraldehyde 3-phosphate + L-tryptophan + H2O. The protein operates within amino-acid biosynthesis; L-tryptophan biosynthesis; L-tryptophan from chorismate: step 5/5. Functionally, the alpha subunit is responsible for the aldol cleavage of indoleglycerol phosphate to indole and glyceraldehyde 3-phosphate. The polypeptide is Tryptophan synthase alpha chain (Paracoccus denitrificans (strain Pd 1222)).